A 318-amino-acid chain; its full sequence is MADACSEMDRGAEKYPLLGFGQAVIGPPGSGKSTYVRAMQALLARMGRKSAIINLDPAGEDEPGAAVSLRELLGLEEVMSELRLGPNGSLLYCMEYLQENLDWLRARLQGLRGTYLLLDCPGQVELYTHHPALPDILRRLGGWGLRLCAVHLVDSHYCTDPAKFISVLCTSLSTMLHVELPHINVLSKMDLIEQYGRLAFNLDYYTEVMDLSFLVEQLTSDPFFRRHKRLHEKLAGVIEDYGLVTFMPLSIKDDKSLQLVLSAVDKASGFCFGEAKQSLGNLMSVAVGADFQFTSTLAFQEKYVENDGRTVEEETLDL.

29 to 34 is a GTP binding site; that stretch reads GSGKST. The Gly-Pro-Asn (GPN)-loop; involved in dimer interface signature appears at 85–87; that stretch reads GPN. 187–190 contributes to the GTP binding site; the sequence is SKMD.

The protein belongs to the GPN-loop GTPase family. As to quaternary structure, heterodimers with gpn1 or gpn3. Binds to RNA polymerase II (RNAPII).

Small GTPase required for proper localization of RNA polymerase II and III (RNAPII and RNAPIII). May act at an RNAP assembly step prior to nuclear import. The protein is GPN-loop GTPase 2 of Xenopus laevis (African clawed frog).